We begin with the raw amino-acid sequence, 286 residues long: Bifunctional protein FolD (286 aa).

NADP(+) is bound by residues 170–172 (GHS) and Ile236.

This sequence belongs to the tetrahydrofolate dehydrogenase/cyclohydrolase family. In terms of assembly, homodimer.

It carries out the reaction (6R)-5,10-methylene-5,6,7,8-tetrahydrofolate + NADP(+) = (6R)-5,10-methenyltetrahydrofolate + NADPH. The catalysed reaction is (6R)-5,10-methenyltetrahydrofolate + H2O = (6R)-10-formyltetrahydrofolate + H(+). Its pathway is one-carbon metabolism; tetrahydrofolate interconversion. In terms of biological role, catalyzes the oxidation of 5,10-methylenetetrahydrofolate to 5,10-methenyltetrahydrofolate and then the hydrolysis of 5,10-methenyltetrahydrofolate to 10-formyltetrahydrofolate. This Methanococcoides burtonii (strain DSM 6242 / NBRC 107633 / OCM 468 / ACE-M) protein is Bifunctional protein FolD.